The following is a 325-amino-acid chain: RNA ligase 1 (325 aa).

It depends on Mg(2+) as a cofactor. Mn(2+) is required as a cofactor. AMPylates itself (auto-AMPylation).

The catalysed reaction is ATP + (ribonucleotide)n-3'-hydroxyl + 5'-phospho-(ribonucleotide)m = (ribonucleotide)n+m + AMP + diphosphate.. Functions as an RNA ligase, in vitro. The ligation reaction entails three nucleotidyl transfer steps. In the first step, the RNA ligase reacts with ATP in the absence of nucleic acid to form a covalent ligase-AMP intermediate and release pyrophosphate. In step 2, the ligase-AMP binds to the nucleic acid and transfers the adenylate to the 5'-PO4 terminus to form an adenylylated intermediate. In step 3, the RNA ligase directs the attack of the 3'-OH on the 5'-phosphoanhydride linkage, resulting in a repaired 3'-5' phosphodiester and release of AMP. Exhibits selectivity for single-stranded RNA substrates and may not have nick-sealing activity on double-stranded DNA-RNA hybrids. May play a role in maintaining RNA integrity under stress conditions, for example in response to reactive oxygen species (ROS). This chain is RNA ligase 1, found in Pongo abelii (Sumatran orangutan).